The following is a 355-amino-acid chain: D-alanine--D-alanine ligase (355 aa).

The ATP-grasp domain occupies Lys143 to Asp350. Ile178–Glu233 is an ATP binding site. Mg(2+)-binding residues include Asp303, Glu317, and Asn319.

It belongs to the D-alanine--D-alanine ligase family. Requires Mg(2+) as cofactor. Mn(2+) serves as cofactor.

It localises to the cytoplasm. It catalyses the reaction 2 D-alanine + ATP = D-alanyl-D-alanine + ADP + phosphate + H(+). It participates in cell wall biogenesis; peptidoglycan biosynthesis. In terms of biological role, cell wall formation. The protein is D-alanine--D-alanine ligase of Prochlorococcus marinus (strain MIT 9312).